Reading from the N-terminus, the 187-residue chain is Signal peptidase complex catalytic subunit SEC11 (187 aa).

Residues 1 to 18 (MLSSLSPYMANPRNTLSQ) lie on the Cytoplasmic side of the membrane. A helical; Signal-anchor for type II membrane protein transmembrane segment spans residues 19–39 (VLNFGLVLSSAFMVWKALSVI). The Lumenal portion of the chain corresponds to 40 to 187 (TNSASPVVVV…MGLMVMLQRE (148 aa)). Catalysis depends on charge relay system residues S53 and H92. N-linked (GlcNAc...) asparagine glycosylation occurs at N125. Catalysis depends on D129, which acts as the Charge relay system. The segment at 173–184 (VLLGFMGLMVML) is C-terminal short (CTS) helix.

Belongs to the peptidase S26B family. In terms of assembly, component of the signal peptidase complex (SPC) composed of a catalytic subunit SEC11 and three accessory subunits SPC1, SPC2 and SPC3. The complex induces a local thinning of the ER membrane which is used to measure the length of the signal peptide (SP) h-region of protein substrates. This ensures the selectivity of the complex towards h-regions shorter than 18-20 amino acids. SPC associates with the translocon complex.

It localises to the endoplasmic reticulum membrane. The catalysed reaction is Cleavage of hydrophobic, N-terminal signal or leader sequences from secreted and periplasmic proteins.. Catalytic component of the signal peptidase complex (SPC) which catalyzes the cleavage of N-terminal signal sequences from nascent proteins as they are translocated into the lumen of the endoplasmic reticulum. Specifically cleaves N-terminal signal peptides that contain a hydrophobic alpha-helix (h-region) shorter than 18-20 amino acids. The chain is Signal peptidase complex catalytic subunit SEC11 (SEC11) from Ajellomyces capsulatus (strain G186AR / H82 / ATCC MYA-2454 / RMSCC 2432) (Darling's disease fungus).